Reading from the N-terminus, the 155-residue chain is Deoxyuridine 5'-triphosphate nucleotidohydrolase (155 aa).

Substrate contacts are provided by residues 71 to 73, Asn-84, 88 to 90, and Lys-98; these read RSG and TID.

Belongs to the dUTPase family. The cofactor is Mg(2+).

The enzyme catalyses dUTP + H2O = dUMP + diphosphate + H(+). It functions in the pathway pyrimidine metabolism; dUMP biosynthesis; dUMP from dCTP (dUTP route): step 2/2. This enzyme is involved in nucleotide metabolism: it produces dUMP, the immediate precursor of thymidine nucleotides and it decreases the intracellular concentration of dUTP so that uracil cannot be incorporated into DNA. This Corynebacterium jeikeium (strain K411) protein is Deoxyuridine 5'-triphosphate nucleotidohydrolase.